The primary structure comprises 305 residues: C alpha-dehydrogenase (305 aa).

10 to 34 serves as a coordination point for NAD(+); the sequence is FITGGASGAGFGQAKVFGQAGAKIV. Residue S144 participates in substrate binding. Y157 serves as the catalytic Proton acceptor.

Belongs to the short-chain dehydrogenases/reductases (SDR) family.

Its pathway is secondary metabolite metabolism; lignin degradation. In terms of biological role, catalyzes the C alpha dehydrogenation of arylglycerol-beta-aryl ether (C alpha alcohol type) (compound IV). This Sphingobium sp. (strain NBRC 103272 / SYK-6) protein is C alpha-dehydrogenase (ligD).